The sequence spans 140 residues: Large ribosomal subunit protein bL34m (140 aa).

This sequence belongs to the bacterial ribosomal protein bL34 family. As to quaternary structure, component of the mitochondrial large ribosomal subunit (mt-LSU). Mature N.crassa 74S mitochondrial ribosomes consist of a small (37S) and a large (54S) subunit. The 37S small subunit contains a 16S ribosomal RNA (16S mt-rRNA) and 32 different proteins. The 54S large subunit contains a 23S rRNA (23S mt-rRNA) and 42 different proteins.

Its subcellular location is the mitochondrion. Component of the mitochondrial ribosome (mitoribosome), a dedicated translation machinery responsible for the synthesis of mitochondrial genome-encoded proteins, including at least some of the essential transmembrane subunits of the mitochondrial respiratory chain. The mitoribosomes are attached to the mitochondrial inner membrane and translation products are cotranslationally integrated into the membrane. The polypeptide is Large ribosomal subunit protein bL34m (mrpl34) (Neurospora crassa (strain ATCC 24698 / 74-OR23-1A / CBS 708.71 / DSM 1257 / FGSC 987)).